The primary structure comprises 607 residues: Phosphoenolpyruvate carboxykinase [GTP] (607 aa).

Substrate contacts are provided by residues Arg81 and 221–223 (YGG). Mn(2+) is bound by residues Lys230 and His250. Substrate is bound at residue Ser272. 273 to 278 (ACGKTN) provides a ligand contact to GTP. Cys274 is a catalytic residue. Position 297 (Asp297) interacts with Mn(2+). Residue 388 to 390 (NSR) participates in substrate binding. Residues Arg390, Arg421, and 516-519 (FGDN) each bind GTP.

It belongs to the phosphoenolpyruvate carboxykinase [GTP] family. As to quaternary structure, monomer. Mn(2+) is required as a cofactor.

Its subcellular location is the cytoplasm. The catalysed reaction is oxaloacetate + GTP = phosphoenolpyruvate + GDP + CO2. The protein operates within carbohydrate biosynthesis; gluconeogenesis. In terms of biological role, catalyzes the conversion of oxaloacetate (OAA) to phosphoenolpyruvate (PEP), the rate-limiting step in the metabolic pathway that produces glucose from lactate and other precursors derived from the citric acid cycle. The polypeptide is Phosphoenolpyruvate carboxykinase [GTP] (Renibacterium salmoninarum (strain ATCC 33209 / DSM 20767 / JCM 11484 / NBRC 15589 / NCIMB 2235)).